We begin with the raw amino-acid sequence, 330 residues long: Aspartate--ammonia ligase (330 aa).

Belongs to the class-II aminoacyl-tRNA synthetase family. AsnA subfamily.

Its subcellular location is the cytoplasm. It catalyses the reaction L-aspartate + NH4(+) + ATP = L-asparagine + AMP + diphosphate + H(+). It functions in the pathway amino-acid biosynthesis; L-asparagine biosynthesis; L-asparagine from L-aspartate (ammonia route): step 1/1. In Edwardsiella ictaluri (strain 93-146), this protein is Aspartate--ammonia ligase.